The primary structure comprises 409 residues: MDVCEESETFLENTENQKIEATEETAPTLHCPDEKSERSHVCCLLGVSDLTLEEDGRASECAISTGWEEAVHGWGRTSPTACIWSKKKVKRGRAREGTNGGNDCLFCMSLSQGSLEPRSLLEVGKLEAGAEAEVSTQKSWSSEKNWSGLSQGPGTASREQSNKLCIPTDVHGEKKSLQLKEFIWCMEEWPMPETVSSKAGRNPSGSPEQGLSTPDSLAAKALVVLPPLKSSPHNLDVLSKKSRNIFWQPEEKVLRVEKDDCMACADGLKGVDGKGEKRHFELASHVKVTNVLPFPPTAAQTHLLSAESQRCCLHWSLLPQKSTVFPPNPSDIHYLATLQVLGQQGKQSCRTRLKTKDTKPPRTTAKHIITEAKQQNRPHVLESKVFPKPLLPSLTVSRVVIPVSTHRVL.

Disordered regions lie at residues 12-32 (ENTE…LHCP), 133-160 (EVST…SREQ), and 194-213 (TVSS…GLST). Over residues 134–160 (VSTQKSWSSEKNWSGLSQGPGTASREQ) the composition is skewed to polar residues.

This is an uncharacterized protein from Mus musculus (Mouse).